The chain runs to 471 residues: 3-isopropylmalate dehydratase large subunit (471 aa).

The [4Fe-4S] cluster site is built by Cys-347, Cys-407, and Cys-410.

It belongs to the aconitase/IPM isomerase family. LeuC type 1 subfamily. As to quaternary structure, heterodimer of LeuC and LeuD. [4Fe-4S] cluster is required as a cofactor.

The catalysed reaction is (2R,3S)-3-isopropylmalate = (2S)-2-isopropylmalate. Its pathway is amino-acid biosynthesis; L-leucine biosynthesis; L-leucine from 3-methyl-2-oxobutanoate: step 2/4. In terms of biological role, catalyzes the isomerization between 2-isopropylmalate and 3-isopropylmalate, via the formation of 2-isopropylmaleate. The polypeptide is 3-isopropylmalate dehydratase large subunit (Edwardsiella ictaluri (strain 93-146)).